Consider the following 513-residue polypeptide: Putative ADP-ribosyl glycohydrolase L444 (513 aa).

The span at 1 to 23 (MSDKIQSRESKTTKPTKTEKISD) shows a compositional bias: basic and acidic residues. The segment at 1-33 (MSDKIQSRESKTTKPTKTEKISDKSGNLSQVKS) is disordered. Polar residues predominate over residues 24 to 33 (KSGNLSQVKS).

It belongs to the ADP-ribosylglycohydrolase family.

The protein is Putative ADP-ribosyl glycohydrolase L444 of Acanthamoeba polyphaga mimivirus (APMV).